Reading from the N-terminus, the 587-residue chain is Leucine-rich repeat-containing protein 63 (587 aa).

LRR repeat units follow at residues 251–274, 344–367, 368–390, 392–413, 414–436, 437–459, and 487–510; these read QSVI…IPPR, AFQL…ILCL, KNLQ…IQQL, FLRI…LFSL, SYLE…IQKL, RSLE…ILKL, and LTQI…IPVE.

In Homo sapiens (Human), this protein is Leucine-rich repeat-containing protein 63 (LRRC63).